Here is a 294-residue protein sequence, read N- to C-terminus: Glyceraldehyde-3-phosphate dehydrogenase (294 aa).

NAD(+) contacts are provided by Asp-19, Lys-63, and Thr-105. Residues 134 to 136 (SCT), Thr-165, 194 to 195 (TG), and Arg-217 contribute to the D-glyceraldehyde 3-phosphate site. The active-site Nucleophile is the Cys-135.

The protein belongs to the glyceraldehyde-3-phosphate dehydrogenase family. Homotetramer.

Its subcellular location is the cytoplasm. It carries out the reaction D-glyceraldehyde 3-phosphate + phosphate + NAD(+) = (2R)-3-phospho-glyceroyl phosphate + NADH + H(+). The protein operates within carbohydrate degradation; glycolysis; pyruvate from D-glyceraldehyde 3-phosphate: step 1/5. In terms of biological role, catalyzes the oxidative phosphorylation of glyceraldehyde 3-phosphate (G3P) to 1,3-bisphosphoglycerate (BPG) using the cofactor NAD. The first reaction step involves the formation of a hemiacetal intermediate between G3P and a cysteine residue, and this hemiacetal intermediate is then oxidized to a thioester, with concomitant reduction of NAD to NADH. The reduced NADH is then exchanged with the second NAD, and the thioester is attacked by a nucleophilic inorganic phosphate to produce BPG. The sequence is that of Glyceraldehyde-3-phosphate dehydrogenase (gap) from Atlantibacter hermannii (Escherichia hermannii).